The chain runs to 214 residues: Adenylate kinase (214 aa).

14-19 (GSGKGT) lines the ATP pocket. Residues 34-63 (SSGDLFRSAIKSATPLGSKAAEYINKGLLV) are NMP. AMP contacts are provided by residues Ser35, Arg40, 61 to 63 (LLV), 89 to 92 (GFPR), and Gln96. Positions 130-163 (SRFICPACNYVYNQSQGFKECPTCHVALIRRSDD) are LID. Arg131 provides a ligand contact to ATP. Positions 134 and 137 each coordinate Zn(2+). 140–141 (VY) contributes to the ATP binding site. Residues Cys150 and Cys153 each contribute to the Zn(2+) site. Residues Arg160 and Arg171 each contribute to the AMP site. Residue Thr199 participates in ATP binding.

This sequence belongs to the adenylate kinase family. In terms of assembly, monomer.

It localises to the cytoplasm. It carries out the reaction AMP + ATP = 2 ADP. The protein operates within purine metabolism; AMP biosynthesis via salvage pathway; AMP from ADP: step 1/1. Catalyzes the reversible transfer of the terminal phosphate group between ATP and AMP. Plays an important role in cellular energy homeostasis and in adenine nucleotide metabolism. In Chlamydia caviae (strain ATCC VR-813 / DSM 19441 / 03DC25 / GPIC) (Chlamydophila caviae), this protein is Adenylate kinase.